A 286-amino-acid polypeptide reads, in one-letter code: UPF0173 metal-dependent hydrolase RALTA_A1748 (286 aa).

This sequence belongs to the UPF0173 family.

The sequence is that of UPF0173 metal-dependent hydrolase RALTA_A1748 from Cupriavidus taiwanensis (strain DSM 17343 / BCRC 17206 / CCUG 44338 / CIP 107171 / LMG 19424 / R1) (Ralstonia taiwanensis (strain LMG 19424)).